We begin with the raw amino-acid sequence, 393 residues long: Glutamyl-tRNA reductase (393 aa).

Residues threonine 47–arginine 50, serine 98, glutamate 103–aspartate 105, and glutamine 109 contribute to the substrate site. The Nucleophile role is filled by cysteine 48. Glycine 177–glycine 182 lines the NADP(+) pocket.

Belongs to the glutamyl-tRNA reductase family. In terms of assembly, homodimer.

It catalyses the reaction (S)-4-amino-5-oxopentanoate + tRNA(Glu) + NADP(+) = L-glutamyl-tRNA(Glu) + NADPH + H(+). It participates in porphyrin-containing compound metabolism; protoporphyrin-IX biosynthesis; 5-aminolevulinate from L-glutamyl-tRNA(Glu): step 1/2. In terms of biological role, catalyzes the NADPH-dependent reduction of glutamyl-tRNA(Glu) to glutamate 1-semialdehyde (GSA). This chain is Glutamyl-tRNA reductase, found in Pyrobaculum neutrophilum (strain DSM 2338 / JCM 9278 / NBRC 100436 / V24Sta) (Thermoproteus neutrophilus).